A 264-amino-acid chain; its full sequence is Nuclear egress protein 1 (264 aa).

Residues M1–R12 show a composition bias toward basic residues. Positions M1–K22 are disordered. Residues C83–H187 form a CCCH-type zinc finger.

It belongs to the herpesviridae NEC1 protein family. Forms a heterohexameric complex with NEC2. Interacts with capsid vertex specific component 2/CVC2; this interaction directs the capsid to the host inner nuclear membrane to initiate budding. Post-translationally, phosphorylated at serine residues in the N-terminus. This phosphorylation regulates the localization within the inner nuclear membrane.

Its subcellular location is the host nucleus inner membrane. In terms of biological role, plays an essential role in virion nuclear egress, the first step of virion release from infected cell. Within the host nucleus, NEC1 interacts with the newly formed capsid through the vertexes and directs it to the inner nuclear membrane by associating with NEC2. Induces the budding of the capsid at the inner nuclear membrane as well as its envelopment into the perinuclear space. There, the NEC1/NEC2 complex promotes the fusion of the enveloped capsid with the outer nuclear membrane and the subsequent release of the viral capsid into the cytoplasm where it will reach the secondary budding sites in the host Golgi or trans-Golgi network. This is Nuclear egress protein 1 from Human herpesvirus 6A (strain Uganda-1102) (HHV-6 variant A).